Reading from the N-terminus, the 269-residue chain is Cyclic AMP-dependent transcription factor ATF-1 (269 aa).

The interval 1–90 (MEDSHKSNTT…GEGENPSISA (90 aa)) is disordered. Over residues 9–18 (TTETASQPGS) the composition is skewed to polar residues. A KID domain is found at 31–90 (QVSSLSESEESQDSSDSIGSSQKAHGILARRPSYRKILKDLSSEDTRGRKGEGENPSISA). A Phosphoserine; by CaMK1, CDK3, RPS6KA4 and RPS6KA5 modification is found at Ser-63. Basic and acidic residues predominate over residues 67–83 (ILKDLSSEDTRGRKGEG). A Phosphoserine; by HIPK2 modification is found at Ser-196. Residue Lys-206 forms a Glycyl lysine isopeptide (Lys-Gly) (interchain with G-Cter in SUMO2) linkage. A bZIP domain is found at 211–269 (QLRREIRLMKNREAARECRRKKKEYVKCLENRVAVLENQNKTLIEELKTLKDLYSHKSV). Positions 213-237 (RREIRLMKNREAARECRRKKKEYVK) are basic motif. The leucine-zipper stretch occupies residues 239–260 (LENRVAVLENQNKTLIEELKTL).

It belongs to the bZIP family. ATF subfamily. As to quaternary structure, binds DNA as a dimer. Interacts with HIPK2 and CDK3. Interacts with MOTS-c, a peptide produced by the mitochondrially encoded 12S rRNA MT-RNR1; the interaction occurs in the nucleus following metabolic stress. Post-translationally, phosphorylated at Ser-196 by HIPK2 in response to genotoxic stress. This phosphorylation promotes transcription repression of FTH1 and other antioxidant detoxification genes. The CDK3-mediated phosphorylation at Ser-63 promotes its transactivation and transcriptional activities. Phosphorylated at Ser-63 by RPS6KA4 and RPS6KA5 in response to mitogenic or stress stimuli.

It localises to the nucleus. Functionally, binds the cAMP response element (CRE) (consensus: 5'-GTGACGT[AC][AG]-3'), a sequence present in many viral and cellular promoters. Binds to the Tax-responsive element (TRE) of HTLV-I. Mediates PKA-induced stimulation of CRE-reporter genes. Represses the expression of FTH1 and other antioxidant detoxification genes. Triggers cell proliferation and transformation. This Mus musculus (Mouse) protein is Cyclic AMP-dependent transcription factor ATF-1 (Atf1).